A 395-amino-acid chain; its full sequence is Long-chain-alcohol dehydrogenase 1 (395 aa).

NAD(+) is bound by residues 98–102 and 141–144; these read GSALD and TTSG.

This sequence belongs to the iron-containing alcohol dehydrogenase family. Homooctamer.

The catalysed reaction is glycerol + NAD(+) = dihydroxyacetone + NADH + H(+). It catalyses the reaction a long-chain primary fatty alcohol + 2 NAD(+) + H2O = a long-chain fatty acid + 2 NADH + 3 H(+). In terms of biological role, long-chain alkyl alcohol dehydrogenase that can oxidize a broad range of alkyl alcohols from ethanol to 1-triacontanol (C2 to C30) as well as 1,3-propanediol and acetaldehyde. The best substrate is ethanol. Also oxidizes glycerol. This is Long-chain-alcohol dehydrogenase 1 (adh1) from Geobacillus thermodenitrificans (strain NG80-2).